The primary structure comprises 358 residues: Starch-binding domain-containing protein 1 (358 aa).

Over 1–6 (MGAVWS) the chain is Extracellular. A helical transmembrane segment spans residues 7–23 (ALLVGGGLAGALFVWLL). The Cytoplasmic segment spans residues 24-358 (RGGPGDTGKD…KVVHAWWGIH (335 aa)). Residues 30-42 (TGKDGDAEQEKDA) are compositionally biased toward basic and acidic residues. 2 disordered regions span residues 30-70 (TGKD…QELV) and 104-151 (SREV…SPMG). Residues 50 to 66 (PGGHQSGSSGLSPGPSG) show a composition bias toward low complexity. Serine 65 is subject to Phosphoserine. Residues 106-115 (EVCDNSREHV) show a composition bias toward basic and acidic residues. At serine 117 the chain carries Phosphoserine. Residues 126-140 (PATSETSNSRSYSEV) show a composition bias toward polar residues. Phosphoserine occurs at positions 148, 175, 188, and 194. Residues 200 to 206 (HEEWEMV) carry the LIR motif. Serine 210, serine 211, and serine 220 each carry phosphoserine. The CBM20 domain occupies 258–357 (PAGSQQVSVR…DKVVHAWWGI (100 aa)).

As to quaternary structure, interacts with the ATG8 family proteins GABARAP and GABARAPL1. Interacts with several glycogen-associated proteins, such as GYS2 (liver glycogen synthase), GDE (glycogen debranching enzyme), GBE1 (glycogen branching enzyme 1) and EPM2A (Laforin). In terms of processing, ubiquitinated, which leads to proteasomal degradation. As to expression, expressed at high level in skeletal and cardiac muscles. Moderately expressed in liver and placenta. No expression is found in pancreas, kidney or lung. Present in skeletal muscle, heart and placenta (at protein level).

Its subcellular location is the preautophagosomal structure membrane. It is found in the endoplasmic reticulum membrane. It localises to the cell membrane. The protein localises to the sarcolemma. The protein resides in the T-tubule. In terms of biological role, acts as a cargo receptor for glycogen. Delivers its cargo to an autophagic pathway called glycophagy, resulting in the transport of glycogen to lysosomes. This Homo sapiens (Human) protein is Starch-binding domain-containing protein 1.